Reading from the N-terminus, the 373-residue chain is LIM domain-binding protein 2 (373 aa).

Disordered stretches follow at residues Ala-244–Ser-291 and Gln-327–Gln-373. Low complexity predominate over residues Ser-263 to Gly-280. Residues Asp-298–Glu-337 enclose the LIM interaction domain (LID) domain. A compositionally biased stretch (polar residues) spans Asn-341–Glu-361.

Belongs to the LDB family. Interacts with LHX9. Interacts with SLK; leading to negatively regulate SLK kinase activity. Interacts with LMO4. In terms of processing, ubiquitinated by RLIM/RNF12, leading to its degradation by the proteasome.

The protein localises to the nucleus. Its function is as follows. Transcription cofactor. Binds to the LIM domain of a wide variety of LIM domain-containing transcription factors. The chain is LIM domain-binding protein 2 (LDB2) from Homo sapiens (Human).